Consider the following 357-residue polypeptide: Type II methyltransferase M1.HgaI (357 aa).

The region spanning 5–357 is the SAM-dependent MTase C5-type domain; that stretch reads IMGLSLFSSA…NITREIFNEN (353 aa). Residue C83 is part of the active site.

This sequence belongs to the class I-like SAM-binding methyltransferase superfamily. C5-methyltransferase family.

The catalysed reaction is a 2'-deoxycytidine in DNA + S-adenosyl-L-methionine = a 5-methyl-2'-deoxycytidine in DNA + S-adenosyl-L-homocysteine + H(+). Its function is as follows. A methylase that recognizes DNA with the sequence 5'-GCGTC-3', methylates C-2, and protects the DNA from cleavage by the HgaI endonuclease. The protein is Type II methyltransferase M1.HgaI (hgaIAM) of Avibacterium volantium (Pasteurella volantium).